The sequence spans 288 residues: Protease HtpX (288 aa).

The next 2 helical transmembrane spans lie at valine 4 to isoleucine 24 and leucine 36 to methionine 56. Histidine 143 is a binding site for Zn(2+). The active site involves glutamate 144. Histidine 147 serves as a coordination point for Zn(2+). The next 2 membrane-spanning stretches (helical) occupy residues glycine 151–serine 171 and methionine 193–isoleucine 213. A Zn(2+)-binding site is contributed by glutamate 222.

This sequence belongs to the peptidase M48B family. It depends on Zn(2+) as a cofactor.

It localises to the cell inner membrane. The protein is Protease HtpX of Vibrio vulnificus (strain YJ016).